The following is a 200-amino-acid chain: LexA repressor (200 aa).

Residues 27 to 47 (VREICNAVELRSTSTVHGHLK) constitute a DNA-binding region (H-T-H motif). Residues serine 124 and lysine 161 each act as for autocatalytic cleavage activity in the active site.

The protein belongs to the peptidase S24 family. As to quaternary structure, homodimer.

It catalyses the reaction Hydrolysis of Ala-|-Gly bond in repressor LexA.. In terms of biological role, represses a number of genes involved in the response to DNA damage (SOS response), including recA and lexA. In the presence of single-stranded DNA, RecA interacts with LexA causing an autocatalytic cleavage which disrupts the DNA-binding part of LexA, leading to derepression of the SOS regulon and eventually DNA repair. The protein is LexA repressor of Clostridium tetani (strain Massachusetts / E88).